The primary structure comprises 197 residues: Xanthine phosphoribosyltransferase (197 aa).

Positions 20 and 27 each coordinate xanthine. 128–132 (ANGQA) contacts 5-phospho-alpha-D-ribose 1-diphosphate. A xanthine-binding site is contributed by K156.

This sequence belongs to the purine/pyrimidine phosphoribosyltransferase family. Xpt subfamily. In terms of assembly, homodimer.

It localises to the cytoplasm. It catalyses the reaction XMP + diphosphate = xanthine + 5-phospho-alpha-D-ribose 1-diphosphate. The protein operates within purine metabolism; XMP biosynthesis via salvage pathway; XMP from xanthine: step 1/1. Converts the preformed base xanthine, a product of nucleic acid breakdown, to xanthosine 5'-monophosphate (XMP), so it can be reused for RNA or DNA synthesis. In Bacillus thuringiensis (strain Al Hakam), this protein is Xanthine phosphoribosyltransferase.